Consider the following 128-residue polypeptide: Anti-sigma-F factor antagonist RsfA (128 aa).

Residues 17-128 (LKATIQHHDS…PTTESALSAT (112 aa)) enclose the STAS domain. Cys-73 and Cys-109 are disulfide-bonded.

This sequence belongs to the anti-sigma-factor antagonist family. As to quaternary structure, monomer. Interacts with anti-sigma-F factor RsbW (UsfX).

In terms of biological role, positive, redox-sensitive regulator of sigma-F (SigF) activity. When reduced binds to anti-sigma-F factor RsbW (UsfX) preventing its binding to SigF, thus activating transcription. This Mycobacterium tuberculosis (strain CDC 1551 / Oshkosh) protein is Anti-sigma-F factor antagonist RsfA (rsfA).